Consider the following 309-residue polypeptide: Probable 2,4-dienoyl-CoA reductase decr-1.2 [(3E)-enoyl-CoA-producing] (309 aa).

Residues 28-60 (VLVT…RRME), 32-37 (GGGTGI), Arg-57, and Asp-83 each bind NADP(+). Arg-57 contributes to the substrate binding site. Residues Phe-116 and Ser-124 each contribute to the substrate site. Tyr-166 serves as the catalytic Proton acceptor. NADP(+) is bound by residues Lys-181 and 207–210 (PGPI). Arg-218 lines the substrate pocket.

The protein belongs to the short-chain dehydrogenases/reductases (SDR) family. 2,4-dienoyl-CoA reductase subfamily.

The enzyme catalyses a (2E,4E)-dienoyl-CoA + NADPH + H(+) = a 4,5-saturated-(3E)-enoyl-CoA + NADP(+). It carries out the reaction a (2E,4Z)-dienoyl-CoA + NADPH + H(+) = a 4,5-saturated-(3E)-enoyl-CoA + NADP(+). Its function is as follows. Auxiliary enzyme of beta-oxidation. It participates in the metabolism of unsaturated fatty enoyl-CoA esters having double bonds in both even- and odd-numbered positions. Catalyzes the NADP-dependent reduction of 2,4-dienoyl-CoA to yield trans-3-enoyl-CoA. The protein is Probable 2,4-dienoyl-CoA reductase decr-1.2 [(3E)-enoyl-CoA-producing] of Caenorhabditis elegans.